The sequence spans 610 residues: Calmegin (610 aa).

The first 19 residues, 1–19 (MHFQAFWLCLGLLFISINA), serve as a signal peptide directing secretion. Residues 20 to 471 (EFMDDDVETE…LMAAAEGHPW (452 aa)) are Lumenal-facing. Lys-128 carries the post-translational modification N6-acetyllysine. The cysteines at positions 151 and 185 are disulfide-linked. The tract at residues 258 to 338 (VPPIKPPKEI…KPDDWNEDTD (81 aa)) is disordered. Residues 263–284 (PPKEIEDPNDKKPEEWDERAKI) show a composition bias toward basic and acidic residues. 8 tandem repeats follow at residues 267-280 (IEDP…EWDE), 284-297 (IPDP…DWDE), 303-316 (IEDS…GWLD), 322-335 (IPDP…DWNE), 339-352 (GEWE…PACR), 356-369 (GEWK…PKYK), 370-383 (GVWR…PNYQ), and 384-397 (GIWS…PDYF). The segment covering 317-332 (DEPKFIPDPNAEKPDD) has biased composition (basic and acidic residues). Residues 317 to 350 (DEPKFIPDPNAEKPDDWNEDTDGEWEAPQILNPA) are interaction with PPIB. Cysteines 351 and 355 form a disulfide. The chain crosses the membrane as a helical span at residues 472–492 (LWLIYLVTAGVPIALITSFCW). The Cytoplasmic segment spans residues 493–610 (PRKVKKKHKD…SVRKRRVRKD (118 aa)). Positions 521-548 (QEEKEEKAALEKPMDLEEEKKQNDGEML) are enriched in basic and acidic residues. The tract at residues 521–610 (QEEKEEKAAL…SVRKRRVRKD (90 aa)) is disordered. Acidic residues predominate over residues 549–571 (EKEEESEPEEKSEEEIEIIEGQE). Phosphoserine is present on residues Ser-560, Ser-576, Ser-579, Ser-581, Ser-591, Ser-594, and Ser-601. A compositionally biased stretch (basic residues) spans 601–610 (SVRKRRVRKD).

It belongs to the calreticulin family. As to quaternary structure, interacts with PPIB. Interacts with ADAM2. Interacts with PDILT. Detected in testis (at protein level). Detected in testis.

The protein resides in the endoplasmic reticulum membrane. In terms of biological role, functions during spermatogenesis as a chaperone for a range of client proteins that are important for sperm adhesion onto the egg zona pellucida and for subsequent penetration of the zona pellucida. Required for normal sperm migration from the uterus into the oviduct. Required for normal male fertility. Binds calcium ions. This is Calmegin (CLGN) from Homo sapiens (Human).